The primary structure comprises 405 residues: Arginine biosynthesis bifunctional protein ArgJ (405 aa).

Residues Thr-152, Lys-178, Thr-189, Glu-276, Asn-400, and Thr-405 each coordinate substrate. Thr-189 (nucleophile) is an active-site residue.

Belongs to the ArgJ family. In terms of assembly, heterotetramer of two alpha and two beta chains.

Its subcellular location is the cytoplasm. The catalysed reaction is N(2)-acetyl-L-ornithine + L-glutamate = N-acetyl-L-glutamate + L-ornithine. The enzyme catalyses L-glutamate + acetyl-CoA = N-acetyl-L-glutamate + CoA + H(+). It participates in amino-acid biosynthesis; L-arginine biosynthesis; L-ornithine and N-acetyl-L-glutamate from L-glutamate and N(2)-acetyl-L-ornithine (cyclic): step 1/1. The protein operates within amino-acid biosynthesis; L-arginine biosynthesis; N(2)-acetyl-L-ornithine from L-glutamate: step 1/4. Catalyzes two activities which are involved in the cyclic version of arginine biosynthesis: the synthesis of N-acetylglutamate from glutamate and acetyl-CoA as the acetyl donor, and of ornithine by transacetylation between N(2)-acetylornithine and glutamate. This is Arginine biosynthesis bifunctional protein ArgJ from Pseudomonas syringae pv. syringae (strain B728a).